We begin with the raw amino-acid sequence, 1571 residues long: Pentafunctional AROM polypeptide (1571 aa).

The interval 1–380 is 3-dehydroquinate synthase; that stretch reads MTSVEKVSIL…YQLKAHQVSK (380 aa). NAD(+) is bound by residues 43–45, 81–84, 112–114, and D117; these read DTN, ENNK, and GGV. 7-phospho-2-dehydro-3-deoxy-D-arabino-heptonate is bound at residue R128. Residue 137–138 participates in NAD(+) binding; it reads TS. Positions 144 and 150 each coordinate 7-phospho-2-dehydro-3-deoxy-D-arabino-heptonate. K159 contributes to the NAD(+) binding site. 7-phospho-2-dehydro-3-deoxy-D-arabino-heptonate is bound at residue N160. NAD(+) is bound by residues 177-180 and N188; that span reads FLET. E192 contributes to the Zn(2+) binding site. Residues 192–195 and K244 contribute to the 7-phospho-2-dehydro-3-deoxy-D-arabino-heptonate site; that span reads EVVK. Residue E254 is the Proton acceptor; for 3-dehydroquinate synthase activity of the active site. 7-phospho-2-dehydro-3-deoxy-D-arabino-heptonate is bound by residues 258–262 and H265; that span reads RNLLN. Position 265 (H265) interacts with Zn(2+). Residue H269 is the Proton acceptor; for 3-dehydroquinate synthase activity of the active site. 7-phospho-2-dehydro-3-deoxy-D-arabino-heptonate contacts are provided by H281 and K352. Position 281 (H281) interacts with Zn(2+). Residues 393 to 843 are EPSP synthase; sequence VHPFDDKLIP…WDILHTKFKV (451 aa). C825 functions as the For EPSP synthase activity in the catalytic mechanism. The interval 868–1058 is shikimate kinase; the sequence is KRSIIVIGMR…IPKKRSFYTS (191 aa). Position 875-882 (875-882) interacts with ATP; that stretch reads GMRGAGKS. The tract at residues 1059 to 1271 is 3-dehydroquinase; that stretch reads LTFSDLTEVA…GNEGALDVAQ (213 aa). K1204 (schiff-base intermediate with substrate; for 3-dehydroquinate dehydratase activity) is an active-site residue. Residues 1284 to 1571 are shikimate dehydrogenase; that stretch reads EKHFWIVGNP…DVVHDAVVNQ (288 aa).

It in the N-terminal section; belongs to the sugar phosphate cyclases superfamily. Dehydroquinate synthase family. In the 2nd section; belongs to the EPSP synthase family. This sequence in the 3rd section; belongs to the shikimate kinase family. The protein in the 4th section; belongs to the type-I 3-dehydroquinase family. It in the C-terminal section; belongs to the shikimate dehydrogenase family. In terms of assembly, homodimer. Requires Zn(2+) as cofactor.

It localises to the cytoplasm. The enzyme catalyses 7-phospho-2-dehydro-3-deoxy-D-arabino-heptonate = 3-dehydroquinate + phosphate. The catalysed reaction is 3-dehydroquinate = 3-dehydroshikimate + H2O. It carries out the reaction shikimate + NADP(+) = 3-dehydroshikimate + NADPH + H(+). It catalyses the reaction shikimate + ATP = 3-phosphoshikimate + ADP + H(+). The enzyme catalyses 3-phosphoshikimate + phosphoenolpyruvate = 5-O-(1-carboxyvinyl)-3-phosphoshikimate + phosphate. The protein operates within metabolic intermediate biosynthesis; chorismate biosynthesis; chorismate from D-erythrose 4-phosphate and phosphoenolpyruvate: step 2/7. It participates in metabolic intermediate biosynthesis; chorismate biosynthesis; chorismate from D-erythrose 4-phosphate and phosphoenolpyruvate: step 3/7. It functions in the pathway metabolic intermediate biosynthesis; chorismate biosynthesis; chorismate from D-erythrose 4-phosphate and phosphoenolpyruvate: step 4/7. Its pathway is metabolic intermediate biosynthesis; chorismate biosynthesis; chorismate from D-erythrose 4-phosphate and phosphoenolpyruvate: step 5/7. The protein operates within metabolic intermediate biosynthesis; chorismate biosynthesis; chorismate from D-erythrose 4-phosphate and phosphoenolpyruvate: step 6/7. In terms of biological role, the AROM polypeptide catalyzes 5 consecutive enzymatic reactions in prechorismate polyaromatic amino acid biosynthesis. The polypeptide is Pentafunctional AROM polypeptide (Scheffersomyces stipitis (strain ATCC 58785 / CBS 6054 / NBRC 10063 / NRRL Y-11545) (Yeast)).